Reading from the N-terminus, the 85-residue chain is Coiled-coil-helix-coiled-coil-helix domain-containing protein 7 (85 aa).

In terms of domain architecture, CHCH spans Ser-13 to Met-55. 2 consecutive short sequence motifs (cx9C motif) follow at residues Cys-16–Cys-26 and Cys-37–Cys-47. Intrachain disulfides connect Cys-16/Cys-47 and Cys-26/Cys-37.

The protein belongs to the CHCHD7 family.

The protein localises to the mitochondrion intermembrane space. The sequence is that of Coiled-coil-helix-coiled-coil-helix domain-containing protein 7 (chchd7) from Xenopus tropicalis (Western clawed frog).